Consider the following 304-residue polypeptide: uncharacterized protein (304 aa).

10 consecutive transmembrane segments (helical) span residues 5–25 (TIIL…FIAI), 42–62 (FLLA…PLLF), 68–88 (IFQL…ILYG), 96–116 (IASV…FIFF), 120–140 (LYFF…IILF), 150–170 (TIKG…IYLY), 178–198 (ISIL…FLVI), 215–235 (ILAT…SYFY), 245–265 (ASTI…FVWG), and 268–288 (IGID…ITIF). EamA domains lie at 16–140 (ITWG…IILF) and 162–288 (TSHA…ITIF).

This sequence belongs to the EamA transporter family.

It is found in the cell membrane. This is an uncharacterized protein from Buchnera aphidicola subsp. Schlechtendalia chinensis.